The chain runs to 584 residues: 2-succinyl-5-enolpyruvyl-6-hydroxy-3-cyclohexene-1-carboxylate synthase (584 aa).

The protein belongs to the TPP enzyme family. MenD subfamily. In terms of assembly, homodimer. Requires Mg(2+) as cofactor. The cofactor is Mn(2+). Thiamine diphosphate serves as cofactor.

The catalysed reaction is isochorismate + 2-oxoglutarate + H(+) = 5-enolpyruvoyl-6-hydroxy-2-succinyl-cyclohex-3-ene-1-carboxylate + CO2. It functions in the pathway quinol/quinone metabolism; 1,4-dihydroxy-2-naphthoate biosynthesis; 1,4-dihydroxy-2-naphthoate from chorismate: step 2/7. Its pathway is quinol/quinone metabolism; menaquinone biosynthesis. Its function is as follows. Catalyzes the thiamine diphosphate-dependent decarboxylation of 2-oxoglutarate and the subsequent addition of the resulting succinic semialdehyde-thiamine pyrophosphate anion to isochorismate to yield 2-succinyl-5-enolpyruvyl-6-hydroxy-3-cyclohexene-1-carboxylate (SEPHCHC). The chain is 2-succinyl-5-enolpyruvyl-6-hydroxy-3-cyclohexene-1-carboxylate synthase from Bacillus thuringiensis subsp. konkukian (strain 97-27).